Consider the following 96-residue polypeptide: Protein Vpr (96 aa).

The segment at 1 to 42 is homooligomerization; it reads MEQAPEDQGPQREPYNEWTLELLEELKSEAVRHFPRIWLHSL. Residues S79, S94, and S96 each carry the phosphoserine; by host modification.

It belongs to the HIV-1 VPR protein family. As to quaternary structure, homooligomer, may form homodimer. Interacts with p6-gag region of the Pr55 Gag precursor protein through a (Leu-X-X)4 motif near the C-terminus of the P6gag protein. Interacts with host UNG. May interact with host RAD23A/HHR23A. Interacts with host VPRBP/DCAF1, leading to hijack the CUL4A-RBX1-DDB1-DCAF1/VPRBP complex, mediating ubiquitination of host proteins such as TERT and ZGPAT and arrest of the cell cycle in G2 phase. Phosphorylated on several residues by host. These phosphorylations regulate VPR activity for the nuclear import of the HIV-1 pre-integration complex.

The protein localises to the virion. Its subcellular location is the host nucleus. It localises to the host extracellular space. In terms of biological role, during virus replication, may deplete host UNG protein, and incude G2-M cell cycle arrest. Acts by targeting specific host proteins for degradation by the 26S proteasome, through association with the cellular CUL4A-DDB1 E3 ligase complex by direct interaction with host VPRPB/DCAF-1. Cell cycle arrest reportedly occurs within hours of infection and is not blocked by antiviral agents, suggesting that it is initiated by the VPR carried into the virion. Additionally, VPR induces apoptosis in a cell cycle dependent manner suggesting that these two effects are mechanistically linked. Detected in the serum and cerebrospinal fluid of AIDS patient, VPR may also induce cell death to bystander cells. Functionally, during virus entry, plays a role in the transport of the viral pre-integration (PIC) complex to the host nucleus. This function is crucial for viral infection of non-dividing macrophages. May act directly at the nuclear pore complex, by binding nucleoporins phenylalanine-glycine (FG)-repeat regions. The protein is Protein Vpr of Homo sapiens (Human).